A 496-amino-acid polypeptide reads, in one-letter code: L-arabinose isomerase (496 aa).

Residues E302, E329, H346, and H445 each contribute to the Mn(2+) site.

It belongs to the arabinose isomerase family. The cofactor is Mn(2+).

It carries out the reaction beta-L-arabinopyranose = L-ribulose. It functions in the pathway carbohydrate degradation; L-arabinose degradation via L-ribulose; D-xylulose 5-phosphate from L-arabinose (bacterial route): step 1/3. Catalyzes the conversion of L-arabinose to L-ribulose. This Thermotoga neapolitana (strain ATCC 49049 / DSM 4359 / NBRC 107923 / NS-E) protein is L-arabinose isomerase.